The following is a 469-amino-acid chain: 3-isopropylmalate dehydratase large subunit (469 aa).

Positions 347, 410, and 413 each coordinate [4Fe-4S] cluster.

This sequence belongs to the aconitase/IPM isomerase family. LeuC type 1 subfamily. In terms of assembly, heterodimer of LeuC and LeuD. Requires [4Fe-4S] cluster as cofactor.

It catalyses the reaction (2R,3S)-3-isopropylmalate = (2S)-2-isopropylmalate. The protein operates within amino-acid biosynthesis; L-leucine biosynthesis; L-leucine from 3-methyl-2-oxobutanoate: step 2/4. Its function is as follows. Catalyzes the isomerization between 2-isopropylmalate and 3-isopropylmalate, via the formation of 2-isopropylmaleate. The chain is 3-isopropylmalate dehydratase large subunit from Burkholderia vietnamiensis (strain G4 / LMG 22486) (Burkholderia cepacia (strain R1808)).